The following is a 532-amino-acid chain: Flavin-containing monooxygenase 3 (532 aa).

Residues 9 to 13 (GAGVS), E32, 40 to 41 (LW), and 61 to 62 (NS) contribute to the FAD site. NADP(+) contacts are provided by residues 60-61 (TN) and 195-198 (SGCD). Position 401 is a phosphoserine (S401). The helical transmembrane segment at 512–532 (CHLVKLFVLPVLFIAVFLALI) threads the bilayer.

This sequence belongs to the FMO family. FAD serves as cofactor.

The protein localises to the microsome membrane. The protein resides in the endoplasmic reticulum membrane. The catalysed reaction is trimethylamine + NADPH + O2 = trimethylamine N-oxide + NADP(+) + H2O. It carries out the reaction N,N-dimethylaniline + NADPH + O2 + H(+) = N,N-dimethylaniline N-oxide + NADP(+) + H2O. It catalyses the reaction hypotaurine + NADPH + O2 + H(+) = taurine + NADP(+) + H2O. The enzyme catalyses (S)-nicotine + NADPH + O2 = trans-(S)-nicotine N(1')-oxide + NADP(+) + H2O. The catalysed reaction is albendazole + NADPH + O2 + H(+) = albendazole S-oxide + NADP(+) + H2O. In terms of biological role, essential hepatic enzyme that catalyzes the oxygenation of a wide variety of nitrogen- and sulfur-containing compounds including drugs as well as dietary compounds. Plays an important role in the metabolism of trimethylamine (TMA), via the production of trimethylamine N-oxide (TMAO) metabolite. TMA is generated by the action of gut microbiota using dietary precursors such as choline, choline containing compounds, betaine or L-carnitine. By regulating TMAO concentration, FMO3 directly impacts both platelet responsiveness and rate of thrombus formation. The sequence is that of Flavin-containing monooxygenase 3 (FMO3) from Canis lupus familiaris (Dog).